The primary structure comprises 359 residues: tRNA-specific 2-thiouridylase MnmA (359 aa).

ATP contacts are provided by residues 9 to 16 (GISGGVDS) and Met35. Residues 95–97 (NPD) are interaction with target base in tRNA. The active-site Nucleophile is the Cys100. A disulfide bridge connects residues Cys100 and Cys197. Position 124 (Gly124) interacts with ATP. Residues 147–149 (KDQ) form an interaction with tRNA region. Cys197 acts as the Cysteine persulfide intermediate in catalysis. Positions 309–310 (RY) are interaction with tRNA.

This sequence belongs to the MnmA/TRMU family.

It localises to the cytoplasm. The enzyme catalyses S-sulfanyl-L-cysteinyl-[protein] + uridine(34) in tRNA + AH2 + ATP = 2-thiouridine(34) in tRNA + L-cysteinyl-[protein] + A + AMP + diphosphate + H(+). Its function is as follows. Catalyzes the 2-thiolation of uridine at the wobble position (U34) of tRNA, leading to the formation of s(2)U34. The protein is tRNA-specific 2-thiouridylase MnmA of Francisella philomiragia subsp. philomiragia (strain ATCC 25017 / CCUG 19701 / FSC 153 / O#319-036).